The sequence spans 546 residues: Chaperonin GroEL (546 aa).

ATP contacts are provided by residues 30-33 (TLGP), lysine 51, 87-91 (DGTTT), glycine 415, and aspartate 495.

The protein belongs to the chaperonin (HSP60) family. In terms of assembly, forms a cylinder of 14 subunits composed of two heptameric rings stacked back-to-back. Interacts with the co-chaperonin GroES.

It is found in the cytoplasm. It catalyses the reaction ATP + H2O + a folded polypeptide = ADP + phosphate + an unfolded polypeptide.. Functionally, together with its co-chaperonin GroES, plays an essential role in assisting protein folding. The GroEL-GroES system forms a nano-cage that allows encapsulation of the non-native substrate proteins and provides a physical environment optimized to promote and accelerate protein folding. The protein is Chaperonin GroEL of Brucella ovis (strain ATCC 25840 / 63/290 / NCTC 10512).